A 341-amino-acid chain; its full sequence is UDP-glucose 4-epimerase (341 aa).

This sequence belongs to the polysaccharide synthase family.

It catalyses the reaction UDP-alpha-D-glucose = UDP-alpha-D-galactose. Its function is as follows. Epimerizes UDP-galactose to UDP-glucose. The chain is UDP-glucose 4-epimerase (capD) from Rickettsia conorii (strain ATCC VR-613 / Malish 7).